Here is a 337-residue protein sequence, read N- to C-terminus: MDSTNSISLAEAVKIAEARFKAAVQGCKDDWHNGNDLVILQDNIPQLFGGILIEHFKHCVGEVSGFPVELTVMDSGNSNYHTLVQMPKNNMRLSQVASSPKSAKTSPSEQASINLRAVAAGLKKAPRPMNCWIIFRDAMHKHLRAEFPHLTIQEISTQCSQIWHNLSPEAKRPWQDAAQSAKEEHLRQHPNYKYTPRKPGEKKKRQSRKSKRAAATTTAPEVLQFQLSPNLIPTVPEVTDQPPLTANPVAATGDSPCPEDVLNYFDPNIFPEIYPQAPMAADFFYNAESIRHGLLDAEFDIDFNMDTTFALFDDEMLAFRDGADGDATLPSSFQDTY.

The HMG box DNA-binding region spans 125–193 (APRPMNCWII…EHLRQHPNYK (69 aa)). Positions 171–219 (KRPWQDAAQSAKEEHLRQHPNYKYTPRKPGEKKKRQSRKSKRAAATTTA) are disordered. Positions 200-212 (GEKKKRQSRKSKR) are enriched in basic residues.

The protein localises to the nucleus. This Cochliobolus sativus (Common root rot and spot blotch fungus) protein is Mating-type protein MAT-2 (MAT2).